The following is a 367-amino-acid chain: Phosphoribosylaminoimidazole-succinocarboxamide synthase (367 aa).

The protein belongs to the SAICAR synthetase family.

The enzyme catalyses 5-amino-1-(5-phospho-D-ribosyl)imidazole-4-carboxylate + L-aspartate + ATP = (2S)-2-[5-amino-1-(5-phospho-beta-D-ribosyl)imidazole-4-carboxamido]succinate + ADP + phosphate + 2 H(+). Its pathway is purine metabolism; IMP biosynthesis via de novo pathway; 5-amino-1-(5-phospho-D-ribosyl)imidazole-4-carboxamide from 5-amino-1-(5-phospho-D-ribosyl)imidazole-4-carboxylate: step 1/2. This is Phosphoribosylaminoimidazole-succinocarboxamide synthase from Saccharophagus degradans (strain 2-40 / ATCC 43961 / DSM 17024).